The primary structure comprises 309 residues: Olfactory receptor 1A1 (309 aa).

Residues 1 to 25 (MRENNQSSTLEFILLGVTGQQEQED) are Extracellular-facing. Asparagine 5 is a glycosylation site (N-linked (GlcNAc...) asparagine). The chain crosses the membrane as a helical span at residues 26–49 (FFYILFLFIYPITLIGNLLIVLAI). Residues 50-57 (CSDVHLHN) are Cytoplasmic-facing. A helical transmembrane segment spans residues 58–79 (PMYFLLANLSLVDIFFSSVTIP). Topologically, residues 80–100 (KMLANHLSGSKSISFGGCLTQ) are extracellular. The cysteines at positions 97 and 189 are disulfide-linked. The chain crosses the membrane as a helical span at residues 101–120 (MYFMIDLGNTDSYTLAAMAY). Over 121–139 (DRAVAISRPLHYTTIMSPR) the chain is Cytoplasmic. The helical transmembrane segment at 140 to 158 (SCIWLIAGSWVIGNANALP) threads the bilayer. At 159–195 (HTLLTASLSFCGNQEVANFYCDITPLLKLSCSDIHFH) the chain is on the extracellular side. The chain crosses the membrane as a helical span at residues 196 to 218 (VKMMYLGVGIFSVPLLCIIVSYI). Over 219-235 (RVFSTVFQVPSTKGVLK) the chain is Cytoplasmic. The helical transmembrane segment at 236-258 (AFSTCGSHLTVVSLYYGTVMGMY) threads the bilayer. The Extracellular portion of the chain corresponds to 259–270 (FRPLTNYSLKDA). An N-linked (GlcNAc...) asparagine glycan is attached at asparagine 264. The chain crosses the membrane as a helical span at residues 271–290 (VITVMCTAVTPMLNPFIYSL). Topologically, residues 291–309 (RNRDMKAALQKLFNKRISS) are cytoplasmic.

This sequence belongs to the G-protein coupled receptor 1 family.

The protein localises to the cell membrane. Its function is as follows. Odorant receptor. In Gorilla gorilla gorilla (Western lowland gorilla), this protein is Olfactory receptor 1A1 (OR1A1).